The primary structure comprises 802 residues: Phenylalanine--tRNA ligase beta subunit (802 aa).

One can recognise a tRNA-binding domain in the interval 38–149 (KSSLKPFVIA…ADAPVGTSFA (112 aa)). The region spanning 399–474 (HKPKIVSFPI…RIHGVDNIAP (76 aa)) is the B5 domain. Mg(2+)-binding residues include Asp-452, Asp-458, Glu-461, and Glu-462. In terms of domain architecture, FDX-ACB spans 708 to 801 (SAFQAVKRDF…VGKQTGGVLR (94 aa)).

The protein belongs to the phenylalanyl-tRNA synthetase beta subunit family. Type 1 subfamily. Tetramer of two alpha and two beta subunits. Mg(2+) serves as cofactor.

It localises to the cytoplasm. It catalyses the reaction tRNA(Phe) + L-phenylalanine + ATP = L-phenylalanyl-tRNA(Phe) + AMP + diphosphate + H(+). This Mesorhizobium japonicum (strain LMG 29417 / CECT 9101 / MAFF 303099) (Mesorhizobium loti (strain MAFF 303099)) protein is Phenylalanine--tRNA ligase beta subunit.